Consider the following 479-residue polypeptide: Ribosomal RNA small subunit methyltransferase F (479 aa).

S-adenosyl-L-methionine-binding positions include 125–131, E149, D176, and D194; that span reads AAAPGSK. Residue C247 is the Nucleophile of the active site.

This sequence belongs to the class I-like SAM-binding methyltransferase superfamily. RsmB/NOP family.

The protein resides in the cytoplasm. It carries out the reaction cytidine(1407) in 16S rRNA + S-adenosyl-L-methionine = 5-methylcytidine(1407) in 16S rRNA + S-adenosyl-L-homocysteine + H(+). Specifically methylates the cytosine at position 1407 (m5C1407) of 16S rRNA. The chain is Ribosomal RNA small subunit methyltransferase F from Escherichia coli O7:K1 (strain IAI39 / ExPEC).